We begin with the raw amino-acid sequence, 187 residues long: MRCTSPAALVTFCAGLWISNHVLAQGLEAGVRSRADCEVCKEFLNRFYNSLLTRGIDFSVDTIEEELISFCADTKGKENRLCYYLGATKDSATKILGEVTRPMSVHMPTVKICEKLKKMDSQICELKYEKKLDLESVDLWKMRVAELKQILHSWGEECRACAEKHDYVNLIKELAPKYVETRPQTEL.

The first 24 residues, 1 to 24 (MRCTSPAALVTFCAGLWISNHVLA), serve as a signal peptide directing secretion. 3 cysteine pairs are disulfide-bonded: Cys37–Cys124, Cys40–Cys113, and Cys71–Cys82.

This sequence belongs to the ARMET family.

It is found in the secreted. Its function is as follows. Trophic factor for dopamine neurons. Prevents the 6-hydroxydopamine (6-OHDA)-induced degeneration of dopaminergic neurons. When administered after 6-OHDA-lesioning, restores the dopaminergic function and prevents the degeneration of dopaminergic neurons in substantia nigra. The protein is Cerebral dopamine neurotrophic factor (Cdnf) of Rattus norvegicus (Rat).